Reading from the N-terminus, the 143-residue chain is Ribosome maturation factor RimP (143 aa).

The protein belongs to the RimP family.

The protein localises to the cytoplasm. In terms of biological role, required for maturation of 30S ribosomal subunits. The protein is Ribosome maturation factor RimP of Borrelia recurrentis (strain A1).